The chain runs to 348 residues: Fructose-1,6-bisphosphatase class 1 2 (348 aa).

Residues glutamate 93, aspartate 117, leucine 119, and aspartate 120 each coordinate Mg(2+). Substrate is bound by residues 120–123, asparagine 213, tyrosine 244, and lysine 274; that span reads DGSS. Position 280 (glutamate 280) interacts with Mg(2+).

Belongs to the FBPase class 1 family. As to quaternary structure, homotetramer. Requires Mg(2+) as cofactor.

The protein localises to the cytoplasm. It carries out the reaction beta-D-fructose 1,6-bisphosphate + H2O = beta-D-fructose 6-phosphate + phosphate. Its pathway is carbohydrate biosynthesis; gluconeogenesis. The sequence is that of Fructose-1,6-bisphosphatase class 1 2 from Christiangramia forsetii (strain DSM 17595 / CGMCC 1.15422 / KT0803) (Gramella forsetii).